Here is a 288-residue protein sequence, read N- to C-terminus: Programmed cell death protein 1 (288 aa).

A signal peptide spans 1–24 (MQIPQAPWPVVWAVLQLGWRPGWF). The tract at residues 25-34 (LDSPDRPWNP) is nivolumab binding. Topologically, residues 25-170 (LDSPDRPWNP…RPAGQFQTLV (146 aa)) are extracellular. The Ig-like V-type domain occupies 35–145 (PTFSPALLVV…ESLRAELRVT (111 aa)). N-linked (GlcNAc...) asparagine glycosylation is found at asparagine 49, asparagine 58, asparagine 74, and asparagine 116. Residues cysteine 54 and cysteine 123 are joined by a disulfide bond. The segment at 70 to 77 (MSPSNQTD) is interaction with CD274/PDCD1L1. The tract at residues 74–99 (NQTDKLAAFPEDRSQPGQDCRFRVTQ) is pembrolizumab binding. Residues 171–191 (VGVVGGLLGSLVLLVWVLAVI) traverse the membrane as a helical segment. Residues 192 to 288 (CSRAARGTIG…PEDGHCSWPL (97 aa)) lie on the Cytoplasmic side of the membrane. The ITIM motif signature appears at 221–226 (VDYGEL). The residue at position 223 (tyrosine 223) is a Phosphotyrosine. Lysine 233 participates in a covalent cross-link: Glycyl lysine isopeptide (Lys-Gly) (interchain with G-Cter in ubiquitin). Residue threonine 234 is modified to Phosphothreonine; by MAPK3. An ITSM motif motif is present at residues 247-251 (EYATI). Tyrosine 248 carries the phosphotyrosine modification. A disordered region spans residues 254 to 288 (PSGMGTSSPARRGSADGPRSAQPLRPEDGHCSWPL). The span at 278 to 288 (RPEDGHCSWPL) shows a compositional bias: basic and acidic residues.

In terms of assembly, monomer. Interacts with CD274/PDCD1L1. Interacts with CD273/PDCD1LG2. Interacts with FBXO38; leading to ubiquitination and degradation of PDCD1 by the proteasome. Ubiquitinated at Lys-233 by the SCF(FBXO38) complex, leading to its proteasomal degradation. Ubiquitinated via 'Lys-48'-linked polyubiquitin chains. Deubiquitinated and thus stabilized by USP5. Post-translationally, tyrosine phosphorylated at Tyr-223 (within ITIM motif) and Tyr-248 (ITSM motif) upon ligand binding. Phosphorylation at Tyr-248 promotes the recruitment of the protein tyrosine phosphatase PTPN11/SHP-2 that mediates dephosphorylation of key TCR proximal signaling molecules, such as ZAP70, PRKCQ/PKCtheta and CD247/CD3zeta. Phosphorylation at Thr-234 promotes the recruitment of the deubiquitinase USP5. In terms of processing, N-glycosylation at Asn-58 contains at least two N-acetylglucosamine units and one fucose. N-glycosylation does not affect binding to nivolumab drug.

It localises to the cell membrane. Its activity is regulated as follows. Inhibited by pembrolizumab (also named MK-3475 or lambrolizumab), a monoclonal antibody that prevents the interaction with CD274/PDCD1L1. Inhibited by nivolumab (also named ONO-4538, BMS-936558 or Opdivo), a monoclonal antibody that prevents the interaction with CD274/PDCD1L1. The interaction with nivolumab is not dependent on glycosylation and depends on a loop at the N-terminus (N-terminal loop, corresponding to residues 25-34). Targeting the interaction between PDCD1 and CD274/PDCD1L1 with pembrolizumab and nivolumab antibodies has demonstrated great promise as a strategy for controlling and eradicating cancer. Pembrolizumab and nivolumab are used for treatment of patients with advanced melanoma. These antibodies are also effective against other cancers, such as non-small cell lung cancer, renal cell carcinoma, bladder cancer and Hodgkin's lymphoma. Inhibitory receptor on antigen activated T-cells that plays a critical role in induction and maintenance of immune tolerance to self. Delivers inhibitory signals upon binding to ligands CD274/PDCD1L1 and CD273/PDCD1LG2. Following T-cell receptor (TCR) engagement, PDCD1 associates with CD3-TCR in the immunological synapse and directly inhibits T-cell activation. Suppresses T-cell activation through the recruitment of PTPN11/SHP-2: following ligand-binding, PDCD1 is phosphorylated within the ITSM motif, leading to the recruitment of the protein tyrosine phosphatase PTPN11/SHP-2 that mediates dephosphorylation of key TCR proximal signaling molecules, such as ZAP70, PRKCQ/PKCtheta and CD247/CD3zeta. Functionally, the PDCD1-mediated inhibitory pathway is exploited by tumors to attenuate anti-tumor immunity and escape destruction by the immune system, thereby facilitating tumor survival. The interaction with CD274/PDCD1L1 inhibits cytotoxic T lymphocytes (CTLs) effector function. The blockage of the PDCD1-mediated pathway results in the reversal of the exhausted T-cell phenotype and the normalization of the anti-tumor response, providing a rationale for cancer immunotherapy. The polypeptide is Programmed cell death protein 1 (Homo sapiens (Human)).